Reading from the N-terminus, the 509-residue chain is Photosystem II CP47 reaction center protein (509 aa).

6 helical membrane-spanning segments follow: residues 21–36, 101–115, 140–156, 203–218, 237–252, and 457–472; these read SVHLMHTALVAGWAGS, IVLSGLLFLAAVWHW, GIHLFLSGLLCFGFGAF, IAAGIVGIIAGLFHLT, VLSSSIAAVFFAAFVV, and VFALLFFFGHLWHGAR.

It belongs to the PsbB/PsbC family. PsbB subfamily. PSII is composed of 1 copy each of membrane proteins PsbA, PsbB, PsbC, PsbD, PsbE, PsbF, PsbH, PsbI, PsbJ, PsbK, PsbL, PsbM, PsbT, PsbX, PsbY, PsbZ, Psb30/Ycf12, peripheral proteins PsbO, CyanoQ (PsbQ), PsbU, PsbV and a large number of cofactors. It forms dimeric complexes. The cofactor is Binds multiple chlorophylls. PSII binds additional chlorophylls, carotenoids and specific lipids..

The protein resides in the cellular thylakoid membrane. Its function is as follows. One of the components of the core complex of photosystem II (PSII). It binds chlorophyll and helps catalyze the primary light-induced photochemical processes of PSII. PSII is a light-driven water:plastoquinone oxidoreductase, using light energy to abstract electrons from H(2)O, generating O(2) and a proton gradient subsequently used for ATP formation. In Nostoc sp. (strain PCC 7120 / SAG 25.82 / UTEX 2576), this protein is Photosystem II CP47 reaction center protein.